Consider the following 387-residue polypeptide: O-phospho-L-seryl-tRNA:Cys-tRNA synthase 2 (387 aa).

Pyridoxal 5'-phosphate contacts are provided by residues 89-90 (AR), asparagine 196, and 219-221 (SGH). Lysine 222 carries the N6-(pyridoxal phosphate)lysine modification.

It belongs to the SepCysS family. Homodimer. Interacts with SepRS. Pyridoxal 5'-phosphate serves as cofactor.

The enzyme catalyses O-phospho-L-seryl-tRNA(Cys) + hydrogen sulfide + H(+) = L-cysteinyl-tRNA(Cys) + phosphate. Its function is as follows. Converts O-phospho-L-seryl-tRNA(Cys) (Sep-tRNA(Cys)) to L-cysteinyl-tRNA(Cys) (Cys-tRNA(Cys)). This is O-phospho-L-seryl-tRNA:Cys-tRNA synthase 2 from Methanococcoides burtonii (strain DSM 6242 / NBRC 107633 / OCM 468 / ACE-M).